We begin with the raw amino-acid sequence, 104 residues long: Small ribosomal subunit protein bS18 (104 aa).

Basic and acidic residues predominate over residues 1–14; it reads MMNNEHDNFQKEVE. A disordered region spans residues 1 to 25; sequence MMNNEHDNFQKEVETTTETTFNREE.

The protein belongs to the bacterial ribosomal protein bS18 family. Part of the 30S ribosomal subunit. Forms a tight heterodimer with protein bS6.

Its function is as follows. Binds as a heterodimer with protein bS6 to the central domain of the 16S rRNA, where it helps stabilize the platform of the 30S subunit. The sequence is that of Small ribosomal subunit protein bS18 from Mycoplasma pneumoniae (strain ATCC 29342 / M129 / Subtype 1) (Mycoplasmoides pneumoniae).